The chain runs to 276 residues: MPAASTAATTLLQASQSEVLGEIQSNFLLNSSLWVNIALAGVVILLFVAMGRELESSRAKLIWVATMLVPLVSISSYAGLASGLTVGFLQMPPGHALAGQEVLSPWGRYLTWTFSTPMILLALGLLADTDMASLFTAITMDIGMCITGLAAALVTSSHLLRWVFYGISCAFFIAVLYVLLVEWPADAEAAGTSEIFGTLKLLTVVLWLGYPILWALGSEGVALLSVGVTSWGYSGLDILAKYVFAFLLLRWVAANEDTVTQAGMSLGSGGAAPADD.

Residues 1 to 21 (MPAASTAATTLLQASQSEVLG) constitute a propeptide that is removed on maturation. The Extracellular portion of the chain corresponds to 22 to 25 (EIQS). Residues 26–51 (NFLLNSSLWVNIALAGVVILLFVAMG) traverse the membrane as a helical segment. Over 52–57 (RELESS) the chain is Cytoplasmic. The helical transmembrane segment at 58–81 (RAKLIWVATMLVPLVSISSYAGLA) threads the bilayer. At 82–105 (SGLTVGFLQMPPGHALAGQEVLSP) the chain is on the extracellular side. A helical transmembrane segment spans residues 106-127 (WGRYLTWTFSTPMILLALGLLA). Topologically, residues 128 to 130 (DTD) are cytoplasmic. A helical membrane pass occupies residues 131–154 (MASLFTAITMDIGMCITGLAAALV). Topologically, residues 155-157 (TSS) are extracellular. A helical membrane pass occupies residues 158-180 (HLLRWVFYGISCAFFIAVLYVLL). The Cytoplasmic segment spans residues 181–192 (VEWPADAEAAGT). A helical transmembrane segment spans residues 193–216 (SEIFGTLKLLTVVLWLGYPILWAL). Residues 217–225 (GSEGVALLS) lie on the Extracellular side of the membrane. The chain crosses the membrane as a helical span at residues 226–254 (VGVTSWGYSGLDILAKYVFAFLLLRWVAA). The residue at position 241 (Lys241) is an N6-(retinylidene)lysine. Over 255–276 (NEDTVTQAGMSLGSGGAAPADD) the chain is Cytoplasmic.

Belongs to the archaeal/bacterial/fungal opsin family.

The protein localises to the cell membrane. Light-driven chloride pump. In Haloarcula vallismortis (Halobacterium vallismortis), this protein is Cruxhalorhodopsin-3 (choP3).